Reading from the N-terminus, the 428-residue chain is Gamma-glutamyl phosphate reductase (428 aa).

Belongs to the gamma-glutamyl phosphate reductase family.

The protein localises to the cytoplasm. It catalyses the reaction L-glutamate 5-semialdehyde + phosphate + NADP(+) = L-glutamyl 5-phosphate + NADPH + H(+). It participates in amino-acid biosynthesis; L-proline biosynthesis; L-glutamate 5-semialdehyde from L-glutamate: step 2/2. Catalyzes the NADPH-dependent reduction of L-glutamate 5-phosphate into L-glutamate 5-semialdehyde and phosphate. The product spontaneously undergoes cyclization to form 1-pyrroline-5-carboxylate. The polypeptide is Gamma-glutamyl phosphate reductase (Picosynechococcus sp. (strain ATCC 27264 / PCC 7002 / PR-6) (Agmenellum quadruplicatum)).